The sequence spans 509 residues: 2-isopropylmalate synthase (509 aa).

The 263-residue stretch at Ile5–Lys267 folds into the Pyruvate carboxyltransferase domain. The Mn(2+) site is built by Asp14, His202, His204, and Asn238. The regulatory domain stretch occupies residues Lys391–Asn509.

It belongs to the alpha-IPM synthase/homocitrate synthase family. LeuA type 1 subfamily. In terms of assembly, homodimer. It depends on Mn(2+) as a cofactor.

Its subcellular location is the cytoplasm. It carries out the reaction 3-methyl-2-oxobutanoate + acetyl-CoA + H2O = (2S)-2-isopropylmalate + CoA + H(+). It functions in the pathway amino-acid biosynthesis; L-leucine biosynthesis; L-leucine from 3-methyl-2-oxobutanoate: step 1/4. In terms of biological role, catalyzes the condensation of the acetyl group of acetyl-CoA with 3-methyl-2-oxobutanoate (2-ketoisovalerate) to form 3-carboxy-3-hydroxy-4-methylpentanoate (2-isopropylmalate). This is 2-isopropylmalate synthase from Staphylococcus aureus (strain USA300).